The chain runs to 42 residues: Photosystem I reaction center subunit IX (42 aa).

Residues 8-28 traverse the membrane as a helical segment; it reads YLSTAPVLLTIWLSFTAALVI.

The protein belongs to the PsaJ family.

It localises to the plastid. The protein localises to the chloroplast thylakoid membrane. Functionally, may help in the organization of the PsaE and PsaF subunits. In Guillardia theta (Cryptophyte), this protein is Photosystem I reaction center subunit IX.